The primary structure comprises 319 residues: Olfactory receptor 8U3 (319 aa).

At 1-25 the chain is on the extracellular side; the sequence is MAEVNISYVSEFILKGITDRPELQA. An N-linked (GlcNAc...) asparagine glycan is attached at N5. Residues 26 to 46 form a helical membrane-spanning segment; the sequence is PCFVMFLTIYLVTVLGNLGLI. The Cytoplasmic segment spans residues 47–54; sequence VIIRVDSR. Residues 55–75 traverse the membrane as a helical segment; that stretch reads LHTPMYFFLSHLAFVDLCYSS. Residues 76–99 lie on the Extracellular side of the membrane; the sequence is AITPKMMVNFVVERNTIPFHACAT. A disulfide bridge links C97 with C189. The helical transmembrane segment at 100-120 threads the bilayer; the sequence is QLGCFLTFMITECFLLASMAY. Topologically, residues 121–133 are cytoplasmic; the sequence is DRYVAICSPLHYS. The chain crosses the membrane as a helical span at residues 134–154; sequence TLMSKRVCIQLVAVPYVYSFL. The Extracellular portion of the chain corresponds to 155 to 196; sequence VALFHTIITFRLTYCGPNVINHFYCDDLPLLALSCSDTHMKE. The chain crosses the membrane as a helical span at residues 197–217; sequence ILIFAFAGFDMICSSSIVLTS. The Cytoplasmic segment spans residues 218–237; it reads YLFIIAAILRIRSTQGRRKA. A helical membrane pass occupies residues 238 to 258; it reads ISTCGSHMVAVTIFYGTLIFM. Over 259-271 the chain is Extracellular; that stretch reads YLQPKSNHSLDTD. The N-linked (GlcNAc...) asparagine glycan is linked to N265. The helical transmembrane segment at 272 to 292 threads the bilayer; that stretch reads KMASVFYTVVIPMLNPLIYSL. The Cytoplasmic segment spans residues 293–319; that stretch reads RNKEVKDASKKALDKGYETLKILRLSK.

The protein belongs to the G-protein coupled receptor 1 family.

It localises to the cell membrane. Potential odorant receptor. This Mus musculus (Mouse) protein is Olfactory receptor 8U3.